Reading from the N-terminus, the 243-residue chain is Uridylate kinase (243 aa).

12–15 (KLSG) is a binding site for ATP. An involved in allosteric activation by GTP region spans residues 20–25 (GPGGSG). UMP is bound at residue Gly-56. Residues Gly-57 and Arg-61 each coordinate ATP. UMP contacts are provided by residues Asp-76 and 137-144 (TGSPYFST). Residues Asn-165, Tyr-171, and Asp-174 each coordinate ATP.

Belongs to the UMP kinase family. In terms of assembly, homohexamer.

Its subcellular location is the cytoplasm. It catalyses the reaction UMP + ATP = UDP + ADP. The protein operates within pyrimidine metabolism; CTP biosynthesis via de novo pathway; UDP from UMP (UMPK route): step 1/1. Its activity is regulated as follows. Allosterically activated by GTP. Inhibited by UTP. Catalyzes the reversible phosphorylation of UMP to UDP. The chain is Uridylate kinase from Oenococcus oeni (strain ATCC BAA-331 / PSU-1).